The chain runs to 401 residues: Lsg locus putative protein 1 (401 aa).

11 helical membrane passes run 8–28 (VIYL…LPYL), 36–56 (GYGS…VVSL), 87–107 (IIGS…LFYA), 132–152 (SYAF…VALL), 162–182 (KRIL…YFLY), 199–219 (ALFY…SFFL), 237–257 (LGLY…IQAL), 282–302 (WALF…IIPE), 320–340 (FILF…VNYL), 352–372 (CSVL…FTEI), and 374–394 (YIPY…YFMT).

It belongs to the polysaccharide synthase family. HI_0867/HI_1700 subfamily.

It is found in the cell membrane. This is Lsg locus putative protein 1 from Haemophilus influenzae (strain ATCC 51907 / DSM 11121 / KW20 / Rd).